The following is a 233-amino-acid chain: Antiholin-like protein LrgB (233 aa).

A run of 6 helical transmembrane segments spans residues 5–25 (LGIN…VIAT), 33–53 (GFFL…FLKL), 63–83 (IGGD…AIPL), 97–117 (IFGG…LVAI), 152–172 (LTSL…AKIV), and 212–232 (IAVV…APIL).

It belongs to the CidB/LrgB family. LrgB subfamily.

It localises to the cell membrane. In terms of biological role, inhibits the expression or activity of extracellular murein hydrolases by interacting, possibly with LrgA, with the holin-like proteins CidA and/or CidB. The LrgAB and CidAB proteins may affect the proton motive force of the membrane. May be involved in programmed cell death (PCD), possibly triggering PCD in response to antibiotics and environmental stresses. The chain is Antiholin-like protein LrgB from Staphylococcus epidermidis (strain ATCC 12228 / FDA PCI 1200).